Consider the following 177-residue polypeptide: ATP synthase subunit delta (177 aa).

Belongs to the ATPase delta chain family. In terms of assembly, F-type ATPases have 2 components, F(1) - the catalytic core - and F(0) - the membrane proton channel. F(1) has five subunits: alpha(3), beta(3), gamma(1), delta(1), epsilon(1). F(0) has three main subunits: a(1), b(2) and c(10-14). The alpha and beta chains form an alternating ring which encloses part of the gamma chain. F(1) is attached to F(0) by a central stalk formed by the gamma and epsilon chains, while a peripheral stalk is formed by the delta and b chains.

It localises to the cell inner membrane. F(1)F(0) ATP synthase produces ATP from ADP in the presence of a proton or sodium gradient. F-type ATPases consist of two structural domains, F(1) containing the extramembraneous catalytic core and F(0) containing the membrane proton channel, linked together by a central stalk and a peripheral stalk. During catalysis, ATP synthesis in the catalytic domain of F(1) is coupled via a rotary mechanism of the central stalk subunits to proton translocation. Its function is as follows. This protein is part of the stalk that links CF(0) to CF(1). It either transmits conformational changes from CF(0) to CF(1) or is implicated in proton conduction. The sequence is that of ATP synthase subunit delta from Serratia proteamaculans (strain 568).